Here is a 302-residue protein sequence, read N- to C-terminus: ATP synthase mitochondrial F1 complex assembly factor 1 (302 aa).

This sequence belongs to the ATP11 family. In terms of assembly, interacts with ATP5F1B; involved in the assembly of the F1 component of the mitochondrial ATP synthase (ATPase).

It is found in the mitochondrion inner membrane. Has a complex stabilizing activity in the assembly of the mitochondrial F1-F0 complex. The polypeptide is ATP synthase mitochondrial F1 complex assembly factor 1 (atpaf1) (Danio rerio (Zebrafish)).